Consider the following 85-residue polypeptide: RNA-binding protein Hfq (85 aa).

The Sm domain maps to 10-70 (DIFLNGARKN…ISTINPAKPL (61 aa)).

The protein belongs to the Hfq family. As to quaternary structure, homohexamer.

In terms of biological role, RNA chaperone that binds small regulatory RNA (sRNAs) and mRNAs to facilitate mRNA translational regulation in response to envelope stress, environmental stress and changes in metabolite concentrations. Also binds with high specificity to tRNAs. This Clostridium botulinum (strain 657 / Type Ba4) protein is RNA-binding protein Hfq.